The chain runs to 79 residues: Large ribosomal subunit protein uL24 (79 aa).

The interval 1 to 29 is disordered; it reads MPKLKKLLLKVSTSKPNTNPPSQNEEKGT. Residues 11-23 are compositionally biased toward polar residues; the sequence is VSTSKPNTNPPSQ.

The protein belongs to the universal ribosomal protein uL24 family. As to quaternary structure, part of the 50S ribosomal subunit.

In terms of biological role, one of two assembly initiator proteins, it binds directly to the 5'-end of the 23S rRNA, where it nucleates assembly of the 50S subunit. Its function is as follows. One of the proteins that surrounds the polypeptide exit tunnel on the outside of the subunit. In Onion yellows phytoplasma (strain OY-M), this protein is Large ribosomal subunit protein uL24 (rplX).